Here is an 894-residue protein sequence, read N- to C-terminus: Glutamate receptor 3 (894 aa).

Residues 1-28 form the signal peptide; that stretch reads MARQKKMGQNVLRAVFFLVLGLLGHSHG. At 29 to 552 the chain is on the extracellular side; the sequence is GFPNTISIGG…GVFSFLDPLA (524 aa). 5 N-linked (GlcNAc...) asparagine glycosylation sites follow: Asn63, Asn266, Asn380, Asn415, and Asn422. A disulfide bridge links Cys91 with Cys340. The L-glutamate site is built by Pro508, Thr510, and Arg515. The chain crosses the membrane as a helical span at residues 553-573; sequence YEIWMCIVFASIGVSVVLFLV. The Cytoplasmic portion of the chain corresponds to 574 to 602; that stretch reads SRFSPYEWHLEDNNEEPRDPQSPPDPPNE. The helical; Pore-forming intramembrane region spans 603 to 618; that stretch reads FGIFNSLWFSLGAFMQ. Residues 619–621 lie within the membrane without spanning it; it reads QGC. The S-palmitoyl cysteine moiety is linked to residue Cys621. Over 622-627 the chain is Cytoplasmic; that stretch reads DISPRS. A helical membrane pass occupies residues 628–648; the sequence is LSGRIVGGVWWFFTLIIISSY. At 649–823 the chain is on the extracellular side; it reads TANLAAFLTV…DKTSALSLSN (175 aa). L-glutamate contacts are provided by Ser686, Thr687, and Glu737. Cys750 and Cys805 are joined by a disulfide. Residues 824–844 form a helical membrane-spanning segment; sequence VAGVFYILVGGLGLAMMVALI. At 845–894 the chain is on the cytoplasmic side; that stretch reads EFCYKSRAESKRMKLTKNTQNFKPAPATNTQNYATYREGYNVYGTESVKI. The S-palmitoyl cysteine moiety is linked to residue Cys847. Phosphotyrosine is present on residues Tyr877 and Tyr887.

It belongs to the glutamate-gated ion channel (TC 1.A.10.1) family. GRIA3 subfamily. Homotetramer or heterotetramer of pore-forming glutamate receptor subunits. Tetramers may be formed by the dimerization of dimers. Interacts with PICK1, GRIP1 and GRIP2. Found in a complex with GRIA1, GRIA2, GRIA4, CNIH2, CNIH3, CACNG2, CACNG3, CACNG4, CACNG5, CACNG7 and CACNG8. Interacts with CACNG5. Found in a complex with GRIA1, GRIA2, GRIA4, DLG4, CACNG8 and CNIH2.

The protein resides in the cell membrane. It is found in the postsynaptic cell membrane. The protein localises to the postsynaptic density membrane. The enzyme catalyses Ca(2+)(in) = Ca(2+)(out). Functionally, ionotropic glutamate receptor that functions as a ligand-gated cation channel, gated by L-glutamate and glutamatergic agonists such as alpha-amino-3-hydroxy-5-methyl-4-isoxazolepropionic acid (AMPA), quisqualic acid, and kainic acid. L-glutamate acts as an excitatory neurotransmitter at many synapses in the central nervous system and plays an important role in fast excitatory synaptic transmission by inducing long-term potentiation. Binding of the excitatory neurotransmitter L-glutamate induces a conformation change, leading to the opening of the cation channel, and thereby converts the chemical signal to an electrical impulse upon entry of calcium. The receptor then desensitizes rapidly and enters a transient inactive state, characterized by the presence of bound agonist. In the presence of CACNG8, shows resensitization which is characterized by a delayed accumulation of current flux upon continued application of glutamate. The protein is Glutamate receptor 3 of Macaca fascicularis (Crab-eating macaque).